Consider the following 101-residue polypeptide: Conantokin-L (101 aa).

Positions 1-21 are cleaved as a signal peptide; it reads MQLYTYLYLLVPLVTFHLILG. Positions 22-80 are excised as a propeptide; it reads TGTLDHGGALTERRSTDAIALKPEPVLLQKSSARSTDDNGNDRLTQMKRILKKRGNKAR. Residues Glu83, Glu84, Glu91, and Glu95 each carry the 4-carboxyglutamate modification. Glu91 and Glu95 together coordinate a divalent metal cation. Asn99 is subject to Asparagine amide.

The protein belongs to the conotoxin B superfamily. Ca(2+) is required as a cofactor. Mg(2+) serves as cofactor. As to expression, expressed by the venom duct.

It is found in the secreted. Its function is as follows. Conantokins inhibit N-methyl-D-aspartate (NMDA) receptors. This toxin is far less potent as an anticonvulsant compound than conantokin-R. It induces sleep-like symptoms in mice. The protein is Conantokin-L of Conus lynceus (Lynceus cone).